A 150-amino-acid chain; its full sequence is Large ribosomal subunit protein bL9 (150 aa).

Belongs to the bacterial ribosomal protein bL9 family.

Its function is as follows. Binds to the 23S rRNA. The polypeptide is Large ribosomal subunit protein bL9 (Thioalkalivibrio sulfidiphilus (strain HL-EbGR7)).